Consider the following 326-residue polypeptide: Aldo-keto reductase family 1 member D1 (326 aa).

NADP(+) contacts are provided by residues 22–26 (GLGTY) and D53. Y26 is a binding site for substrate. Y58, W89, E120, and Y132 together coordinate substrate. The active-site Proton donor is the Y58. Residues 169-170 (SN), Q193, and 219-224 (YSPLGT) each bind NADP(+). W230 lines the substrate pocket. An NADP(+)-binding site is contributed by 273-283 (KSFNPERIKEN).

It belongs to the aldo/keto reductase family.

It localises to the cytoplasm. The catalysed reaction is 5beta-cholestan-3-one + NADP(+) = cholest-4-en-3-one + NADPH + H(+). It carries out the reaction 4,5beta-dihydrocortisone + NADP(+) = cortisone + NADPH + H(+). It catalyses the reaction cortisol + NADPH + H(+) = 5beta-dihydrocortisol + NADP(+). The enzyme catalyses corticosterone + NADPH + H(+) = 5beta-dihydrocorticosterone + NADP(+). The catalysed reaction is 7alpha,12alpha-dihydroxycholest-4-en-3-one + NADPH + H(+) = 7alpha,12alpha-dihydroxy-5beta-cholestan-3-one + NADP(+). It carries out the reaction 7alpha-hydroxycholest-4-en-3-one + NADPH + H(+) = 7alpha-hydroxy-5beta-cholestan-3-one + NADP(+). It catalyses the reaction epitestosterone + NADPH + H(+) = 5beta-dihydroepitestosterone + NADP(+). The enzyme catalyses androst-4-ene-3,17-dione + NADPH + H(+) = 5beta-androstane-3,17-dione + NADP(+). The catalysed reaction is progesterone + NADPH + H(+) = 5beta-pregnan-3,20-dione + NADP(+). It carries out the reaction 21-hydroxyprogesterone + NADPH + H(+) = 5beta-dihydrodeoxycorticosterone + NADP(+). It catalyses the reaction aldosterone + NADPH + H(+) = 5beta-dihydroaldosterone + NADP(+). The enzyme catalyses 17beta-hydroxyandrosta-1,4-dien-3-one + NADPH + H(+) = 17beta-hydroxy-5beta-androst-1-en-3-one + NADP(+). The catalysed reaction is 17beta-hydroxyestr-4-en-3-one + NADPH + H(+) = 17beta-hydroxy-5beta-estran-3-one + NADP(+). It carries out the reaction 5beta-dihydrotestosterone + NADP(+) = testosterone + NADPH + H(+). It catalyses the reaction androst-4-ene-3,11,17-trione + NADPH + H(+) = 17beta-hydroxyandrost-4-ene-3,11-dione + NADP(+). Its activity is regulated as follows. Subject to inhibition by high substrate concentrations. Inhibited by testosterone concentrations above 10 uM. Inhibited by the primary and secondary bile acids chenodeoxycholic acid and ursodeoxycholic acid. Functionally, catalyzes the stereospecific NADPH-dependent reduction of the C4-C5 double bond of bile acid intermediates and steroid hormones carrying a delta(4)-3-one structure to yield an A/B cis-ring junction. This cis-configuration is crucial for bile acid biosynthesis and plays important roles in steroid metabolism. Capable of reducing a broad range of delta-(4)-3-ketosteroids from C18 (such as, 17beta-hydroxyestr-4-en-3-one) to C27 (such as, 7alpha-hydroxycholest-4-en-3-one). This is Aldo-keto reductase family 1 member D1 (AKR1D1) from Oryctolagus cuniculus (Rabbit).